Here is a 491-residue protein sequence, read N- to C-terminus: Protein nucleotidyltransferase YdiU (491 aa).

Positions 94, 96, 97, 117, 129, 130, 180, and 187 each coordinate ATP. Aspartate 256 (proton acceptor) is an active-site residue. Residues asparagine 257 and aspartate 266 each contribute to the Mg(2+) site. Residue aspartate 266 coordinates ATP.

Belongs to the SELO family. Requires Mg(2+) as cofactor. Mn(2+) is required as a cofactor.

It carries out the reaction L-seryl-[protein] + ATP = 3-O-(5'-adenylyl)-L-seryl-[protein] + diphosphate. It catalyses the reaction L-threonyl-[protein] + ATP = 3-O-(5'-adenylyl)-L-threonyl-[protein] + diphosphate. The catalysed reaction is L-tyrosyl-[protein] + ATP = O-(5'-adenylyl)-L-tyrosyl-[protein] + diphosphate. The enzyme catalyses L-histidyl-[protein] + UTP = N(tele)-(5'-uridylyl)-L-histidyl-[protein] + diphosphate. It carries out the reaction L-seryl-[protein] + UTP = O-(5'-uridylyl)-L-seryl-[protein] + diphosphate. It catalyses the reaction L-tyrosyl-[protein] + UTP = O-(5'-uridylyl)-L-tyrosyl-[protein] + diphosphate. Its function is as follows. Nucleotidyltransferase involved in the post-translational modification of proteins. It can catalyze the addition of adenosine monophosphate (AMP) or uridine monophosphate (UMP) to a protein, resulting in modifications known as AMPylation and UMPylation. The chain is Protein nucleotidyltransferase YdiU from Bacillus cytotoxicus (strain DSM 22905 / CIP 110041 / 391-98 / NVH 391-98).